The primary structure comprises 229 residues: AA9 family lytic polysaccharide monooxygenase E (229 aa).

Positions 1–19 are cleaved as a signal peptide; that stretch reads MRSSDITFVLLSVVATVRS. A Cu(2+)-binding site is contributed by His20. Residues Cys57 and Cys178 are joined by a disulfide bond. Asn76 carries an N-linked (GlcNAc...) asparagine glycan. His99 is a binding site for Cu(2+). O2 is bound by residues His164 and Gln173. Tyr175 is a Cu(2+) binding site. Asn217 carries N-linked (GlcNAc...) asparagine glycosylation.

This sequence belongs to the polysaccharide monooxygenase AA9 family. Requires Cu(2+) as cofactor.

Its subcellular location is the secreted. The catalysed reaction is [(1-&gt;4)-beta-D-glucosyl]n+m + reduced acceptor + O2 = 4-dehydro-beta-D-glucosyl-[(1-&gt;4)-beta-D-glucosyl]n-1 + [(1-&gt;4)-beta-D-glucosyl]m + acceptor + H2O.. Functionally, lytic polysaccharide monooxygenase (LPMO) that depolymerizes crystalline and amorphous polysaccharides via the oxidation of scissile alpha- or beta-(1-4)-glycosidic bonds, yielding C1 and C4 oxidation products. Catalysis by LPMOs requires the reduction of the active-site copper from Cu(II) to Cu(I) by a reducing agent and H(2)O(2) or O(2) as a cosubstrate. This Botryotinia fuckeliana (strain B05.10) (Noble rot fungus) protein is AA9 family lytic polysaccharide monooxygenase E.